The chain runs to 545 residues: ATP synthase subunit alpha (545 aa).

172-179 (GDRKTGKT) provides a ligand contact to ATP.

The protein belongs to the ATPase alpha/beta chains family. In terms of assembly, F-type ATPases have 2 components, CF(1) - the catalytic core - and CF(0) - the membrane proton channel. CF(1) has five subunits: alpha(3), beta(3), gamma(1), delta(1), epsilon(1). CF(0) has three main subunits: a(1), b(2) and c(9-12). The alpha and beta chains form an alternating ring which encloses part of the gamma chain. CF(1) is attached to CF(0) by a central stalk formed by the gamma and epsilon chains, while a peripheral stalk is formed by the delta and b chains.

Its subcellular location is the cell membrane. It catalyses the reaction ATP + H2O + 4 H(+)(in) = ADP + phosphate + 5 H(+)(out). Its function is as follows. Produces ATP from ADP in the presence of a proton gradient across the membrane. The alpha chain is a regulatory subunit. The polypeptide is ATP synthase subunit alpha (Corynebacterium urealyticum (strain ATCC 43042 / DSM 7109)).